We begin with the raw amino-acid sequence, 193 residues long: MEVDLLHFEKKYHNYIVAGIDEAGRGPLAGPVVASAVIIDNANIIHGIKDSKKLSKKKRALLYEQITSNYVWAVAIITHTEIDKINILEATKKACSIAAANLNVKPEIVLVDGNMQFSDERFISIVNGDNLSLSIAAASIIAKVTRDRLMLELSAKFPQYLWHKNSGYGTKEHLEAINKYGLSPYHRKSFKCC.

Residues 15 to 193 (YIVAGIDEAG…PYHRKSFKCC (179 aa)) enclose the RNase H type-2 domain. Asp21, Glu22, and Asp112 together coordinate a divalent metal cation.

It belongs to the RNase HII family. Mn(2+) is required as a cofactor. Mg(2+) serves as cofactor.

The protein resides in the cytoplasm. It catalyses the reaction Endonucleolytic cleavage to 5'-phosphomonoester.. Its function is as follows. Endonuclease that specifically degrades the RNA of RNA-DNA hybrids. This Rickettsia akari (strain Hartford) protein is Ribonuclease HII.